The chain runs to 151 residues: Small ribosomal subunit protein bS6 (151 aa).

The segment at E98 to E151 is disordered. Residues E135–E151 show a composition bias toward acidic residues.

It belongs to the bacterial ribosomal protein bS6 family.

Its function is as follows. Binds together with bS18 to 16S ribosomal RNA. The polypeptide is Small ribosomal subunit protein bS6 (Teredinibacter turnerae (strain ATCC 39867 / T7901)).